Reading from the N-terminus, the 436-residue chain is GTPase Der (436 aa).

2 consecutive EngA-type G domains span residues 4 to 167 and 175 to 351; these read PTIA…PNEE and IKFS…QSQN. GTP is bound by residues 10–17, 57–61, 119–122, 181–188, 229–233, and 294–297; these read GRPNVGKS, DTGGI, NKVD, DTAGM, and NKWD. In terms of domain architecture, KH-like spans 352–436; it reads TRIPSAVLND…PIHLIARKRK (85 aa).

The protein belongs to the TRAFAC class TrmE-Era-EngA-EngB-Septin-like GTPase superfamily. EngA (Der) GTPase family. Associates with the 50S ribosomal subunit.

Its function is as follows. GTPase that plays an essential role in the late steps of ribosome biogenesis. The sequence is that of GTPase Der from Streptococcus sanguinis (strain SK36).